The following is a 130-amino-acid chain: RutC family protein slr0709 (130 aa).

It belongs to the RutC family.

This chain is RutC family protein slr0709, found in Synechocystis sp. (strain ATCC 27184 / PCC 6803 / Kazusa).